We begin with the raw amino-acid sequence, 370 residues long: Cobalt-precorrin-5B C(1)-methyltransferase (370 aa).

This sequence belongs to the CbiD family.

The enzyme catalyses Co-precorrin-5B + S-adenosyl-L-methionine = Co-precorrin-6A + S-adenosyl-L-homocysteine. Its pathway is cofactor biosynthesis; adenosylcobalamin biosynthesis; cob(II)yrinate a,c-diamide from sirohydrochlorin (anaerobic route): step 6/10. Functionally, catalyzes the methylation of C-1 in cobalt-precorrin-5B to form cobalt-precorrin-6A. The protein is Cobalt-precorrin-5B C(1)-methyltransferase of Pseudomonas syringae pv. syringae (strain B728a).